The following is a 169-amino-acid chain: Crossover junction endodeoxyribonuclease RuvC (169 aa).

Active-site residues include Asp-7, Glu-67, and Asp-139. Mg(2+) contacts are provided by Asp-7, Glu-67, and Asp-139.

It belongs to the RuvC family. Homodimer which binds Holliday junction (HJ) DNA. The HJ becomes 2-fold symmetrical on binding to RuvC with unstacked arms; it has a different conformation from HJ DNA in complex with RuvA. In the full resolvosome a probable DNA-RuvA(4)-RuvB(12)-RuvC(2) complex forms which resolves the HJ. Requires Mg(2+) as cofactor.

The protein resides in the cytoplasm. The catalysed reaction is Endonucleolytic cleavage at a junction such as a reciprocal single-stranded crossover between two homologous DNA duplexes (Holliday junction).. In terms of biological role, the RuvA-RuvB-RuvC complex processes Holliday junction (HJ) DNA during genetic recombination and DNA repair. Endonuclease that resolves HJ intermediates. Cleaves cruciform DNA by making single-stranded nicks across the HJ at symmetrical positions within the homologous arms, yielding a 5'-phosphate and a 3'-hydroxyl group; requires a central core of homology in the junction. The consensus cleavage sequence is 5'-(A/T)TT(C/G)-3'. Cleavage occurs on the 3'-side of the TT dinucleotide at the point of strand exchange. HJ branch migration catalyzed by RuvA-RuvB allows RuvC to scan DNA until it finds its consensus sequence, where it cleaves and resolves the cruciform DNA. In Rhodospirillum rubrum (strain ATCC 11170 / ATH 1.1.1 / DSM 467 / LMG 4362 / NCIMB 8255 / S1), this protein is Crossover junction endodeoxyribonuclease RuvC.